The following is a 135-amino-acid chain: Lactoylglutathione lyase (135 aa).

The region spanning 2 to 126 is the VOC domain; that stretch reads QILHTMLRVG…DGYKIEFIEN (125 aa). Histidine 5 contributes to the Ni(2+) binding site. Arginine 9 serves as a coordination point for substrate. Glutamate 56 contacts Ni(2+). Positions 60 and 74 each coordinate substrate. Histidine 74 and glutamate 122 together coordinate Ni(2+). The Proton donor/acceptor role is filled by glutamate 122.

The protein belongs to the glyoxalase I family. As to quaternary structure, homodimer. Requires Ni(2+) as cofactor.

It catalyses the reaction (R)-S-lactoylglutathione = methylglyoxal + glutathione. It functions in the pathway secondary metabolite metabolism; methylglyoxal degradation; (R)-lactate from methylglyoxal: step 1/2. Catalyzes the conversion of hemimercaptal, formed from methylglyoxal and glutathione, to S-lactoylglutathione. In Haemophilus influenzae (strain ATCC 51907 / DSM 11121 / KW20 / Rd), this protein is Lactoylglutathione lyase (gloA).